A 349-amino-acid polypeptide reads, in one-letter code: Phosphoribosylformylglycinamidine cyclo-ligase (349 aa).

It belongs to the AIR synthase family.

It localises to the cytoplasm. The enzyme catalyses 2-formamido-N(1)-(5-O-phospho-beta-D-ribosyl)acetamidine + ATP = 5-amino-1-(5-phospho-beta-D-ribosyl)imidazole + ADP + phosphate + H(+). The protein operates within purine metabolism; IMP biosynthesis via de novo pathway; 5-amino-1-(5-phospho-D-ribosyl)imidazole from N(2)-formyl-N(1)-(5-phospho-D-ribosyl)glycinamide: step 2/2. This is Phosphoribosylformylglycinamidine cyclo-ligase from Methanococcus maripaludis (strain C6 / ATCC BAA-1332).